Reading from the N-terminus, the 661-residue chain is MSGNETPDAGTVKSVSPSSGGSSLPARPTLRERDPNDIENRLRDQIEEDPTQILLYIELIKYYVGKQQVAEIREVFGQLHELFPLESFLWTIHLNWELEQEESGQVETLLAKCLSGELMNNDIYLWSTYLGYVRRKNNTVTGGEEARGTVLKAYELVMEKCAVFEPRSMQFWQDYLQFLEQWKPVSKWEEQSRVEILRKLYKRLLCLPVESLERYWEKYTQWEQEVNQLTARKFIGELSASYMNARSLYQEWSNLTKGLRRSLPTKLNQATQQNLPAPGQYDEYQLQIWTKWIQWELDNKLDLPEVVLRQRVEYVHRQAVQHMCFAPEIWYNYAMFVDENEHEKVLEIAVRCNPGSLSLTFKLAEYLELNNKIEALEERFQHCIARISMELQVMNDTTMDPDKILRQTRKLTFAYCVYMTTMKRVTGLSAARKVFSKCRKLKKDISYEIYVENAYMEYYNNSDVTTPCRVLEFGLKYFQDNGNYINKYLDFLILVKQDAQIKSLFESCIDKIYNLDQLKEIYKKVINYESKFGNLNNVYELERRFFEKFPEAEKIEVFTDRYQLQGENLLKRLEFPYLMDEYGIPVLSGYAVKRSLHSAGIVFDDNGSSKRQRQEQTEAVPMEIIELLKVLPKRQYFKTIVLDPHKLADFLSDKVTIPPCD.

The interval 1 to 37 (MSGNETPDAGTVKSVSPSSGGSSLPARPTLRERDPND) is disordered. The span at 14–23 (SVSPSSGGSS) shows a compositional bias: low complexity. 7 HAT repeats span residues 67–99 (QQVA…WELE), 101–135 (EESG…YVRR), 149–181 (TVLK…FLEQ), 192–225 (SRVE…WEQE), 262–298 (SLPT…WELD), 307–339 (VLRQ…FVDE), and 513–548 (YNLD…FFEK).

It localises to the nucleus. It is found in the cytoplasm. In terms of biological role, component of the cleavage factor IA (CFIA) complex, which is involved in the endonucleolytic cleavage during polyadenylation-dependent pre-mRNA 3'-end formation. This Eremothecium gossypii (strain ATCC 10895 / CBS 109.51 / FGSC 9923 / NRRL Y-1056) (Yeast) protein is mRNA 3'-end-processing protein RNA14 (RNA14).